We begin with the raw amino-acid sequence, 247 residues long: UPF0309 protein Lm4b_02611 (247 aa).

The region spanning 31 to 214 is the SIS domain; that stretch reads VAESIENDGV…ETMVNDNFTP (184 aa).

The protein belongs to the UPF0309 family.

The chain is UPF0309 protein Lm4b_02611 from Listeria monocytogenes serotype 4b (strain CLIP80459).